A 200-amino-acid chain; its full sequence is Large ribosomal subunit protein uL22c (200 aa).

It belongs to the universal ribosomal protein uL22 family. In terms of assembly, part of the 50S ribosomal subunit.

The protein localises to the plastid. The protein resides in the chloroplast. Its function is as follows. This protein binds specifically to 23S rRNA. In terms of biological role, the globular domain of the protein is located near the polypeptide exit tunnel on the outside of the subunit, while an extended beta-hairpin is found that lines the wall of the exit tunnel in the center of the 70S ribosome. In Medicago sativa (Alfalfa), this protein is Large ribosomal subunit protein uL22c (rpl22).